Reading from the N-terminus, the 312-residue chain is D-alanine--D-alanine ligase (312 aa).

In terms of domain architecture, ATP-grasp spans 103-303 (KQQLVPHGIR…YADLVQAIVD (201 aa)). 130–186 (MPRPYVLKPVNEGSSVGVAIIKERDNHGVPIHRDSHGPWQTFATLLAEPFIRGRELT) provides a ligand contact to ATP. Positions 254, 270, and 272 each coordinate Mg(2+).

Belongs to the D-alanine--D-alanine ligase family. The cofactor is Mg(2+). Mn(2+) serves as cofactor.

The protein resides in the cytoplasm. It catalyses the reaction 2 D-alanine + ATP = D-alanyl-D-alanine + ADP + phosphate + H(+). Its pathway is cell wall biogenesis; peptidoglycan biosynthesis. Its function is as follows. Cell wall formation. In Rhizorhabdus wittichii (strain DSM 6014 / CCUG 31198 / JCM 15750 / NBRC 105917 / EY 4224 / RW1) (Sphingomonas wittichii), this protein is D-alanine--D-alanine ligase.